A 252-amino-acid polypeptide reads, in one-letter code: 5'-nucleotidase SurE (252 aa).

Positions 8, 9, 39, and 91 each coordinate a divalent metal cation.

The protein belongs to the SurE nucleotidase family. The cofactor is a divalent metal cation.

The protein resides in the cytoplasm. The enzyme catalyses a ribonucleoside 5'-phosphate + H2O = a ribonucleoside + phosphate. Its function is as follows. Nucleotidase that shows phosphatase activity on nucleoside 5'-monophosphates. This Gemmatimonas aurantiaca (strain DSM 14586 / JCM 11422 / NBRC 100505 / T-27) protein is 5'-nucleotidase SurE.